The chain runs to 363 residues: Serpentine receptor class beta-18 (363 aa).

7 helical membrane-spanning segments follow: residues 52 to 72 (LAQFSHVVFSFMGLIIVVVYI), 92 to 112 (MLLFIVAHSIDMIVLHIYHII), 135 to 155 (FRYTFSFCSMGLAICTYCIYI), 172 to 192 (LILAAQICQLIVISSLIIIWV), 218 to 238 (KATIAVFPINFICFFLSIGLF), 276 to 296 (AALMALFSVASLLMRLVYNFL), and 303 to 323 (TIATLSYIMSIYCFTVPLVIV).

The protein belongs to the nematode receptor-like protein srb family.

It is found in the membrane. The sequence is that of Serpentine receptor class beta-18 (srb-18) from Caenorhabditis elegans.